Here is a 99-residue protein sequence, read N- to C-terminus: Thylakoid membrane protein ssl2009 (99 aa).

The helical transmembrane segment at 10–30 (GFLLGTVIGGVVGGILGSVLA) threads the bilayer. A coiled-coil region spans residues 50–84 (NLDSEENIELARRRLEDKIAQLNLVIDDVRDQLGH).

It is found in the cellular thylakoid membrane. The chain is Thylakoid membrane protein ssl2009 from Synechocystis sp. (strain ATCC 27184 / PCC 6803 / Kazusa).